Here is a 457-residue protein sequence, read N- to C-terminus: Argininosuccinate lyase (457 aa).

It belongs to the lyase 1 family. Argininosuccinate lyase subfamily.

The protein resides in the cytoplasm. The enzyme catalyses 2-(N(omega)-L-arginino)succinate = fumarate + L-arginine. The protein operates within amino-acid biosynthesis; L-arginine biosynthesis; L-arginine from L-ornithine and carbamoyl phosphate: step 3/3. The sequence is that of Argininosuccinate lyase from Erwinia tasmaniensis (strain DSM 17950 / CFBP 7177 / CIP 109463 / NCPPB 4357 / Et1/99).